The chain runs to 417 residues: Putative plant UBX domain-containing protein 14 (417 aa).

Positions 335 to 415 constitute a UBX domain; that stretch reads DRSVVCSICV…GIANSMISVT (81 aa).

This Arabidopsis thaliana (Mouse-ear cress) protein is Putative plant UBX domain-containing protein 14.